Consider the following 1906-residue polypeptide: DENN domain-containing protein 4C (1906 aa).

The 160-residue stretch at 40-199 (KAPITDIAVI…NVFLCYKKSV (160 aa)) folds into the MABP domain. One can recognise a uDENN domain in the interval 191–363 (VFLCYKKSVP…NIPFPSPQRP (173 aa)). The 137-residue stretch at 384–520 (PLPLSGANFS…PCKSLLGTLR (137 aa)) folds into the cDENN domain. One can recognise a dDENN domain in the interval 522-640 (LYQQLCSVHR…CSFVSDKDTG (119 aa)). 3 positions are modified to phosphoserine: Ser702, Ser736, and Ser740. One copy of the PPR repeat lies at 818–852 (DEVCYRVVMQLCGLWVNPVLAVRVLFEMKTARIKP). A compositionally biased stretch (polar residues) spans 904–917 (SQVFSISGGQSDQG). Disordered regions lie at residues 904–942 (SQVFSISGGQSDQGYGSKDELVKEGADGHAPEEHTPPEL) and 963–984 (LQPTPEPQSPTEPPAWGSSIVK). Over residues 920–939 (SKDELVKEGADGHAPEEHTP) the composition is skewed to basic and acidic residues. Thr966 bears the Phosphothreonine mark. The span at 966–975 (TPEPQSPTEP) shows a compositional bias: pro residues. Residue Ser971 is modified to Phosphoserine. A Phosphothreonine modification is found at Thr973. Residues Ser987, Ser1000, Ser1043, Ser1058, Ser1096, and Ser1123 each carry the phosphoserine modification. Positions 1154 to 1171 (NSLQSNSHSDQSRDTQAG) are enriched in polar residues. Residues 1154 to 1184 (NSLQSNSHSDQSRDTQAGAQDPVNKRSSSYA) form a disordered region. Phosphoserine is present on residues Ser1181, Ser1221, Ser1240, Ser1248, and Ser1274. Residues 1246-1317 (SCSMELHGEG…PQSPYRAYKD (72 aa)) are disordered. The span at 1281-1291 (PPARDSTETEK) shows a compositional bias: basic and acidic residues. The span at 1292–1302 (SSPAVSSSKTL) shows a compositional bias: polar residues. Residues Ser1321, Ser1333, and Ser1342 each carry the phosphoserine modification. Disordered stretches follow at residues 1410–1440 (SPNTSVSGLVPSELTQSNTSLGSSSSSGDVG), 1548–1577 (STSGDSLQSGSIPSASEPSEHKPTSSSAEP), and 1596–1628 (ASYTVESSDEIKKTNGDVQSVKMSSVPNSLSKR). A compositionally biased stretch (low complexity) spans 1423-1437 (LTQSNTSLGSSSSSG). Composition is skewed to polar residues over residues 1548-1564 (STSGDSLQSGSIPSASE) and 1611-1628 (GDVQSVKMSSVPNSLSKR). Residues Ser1620, Ser1624, Ser1626, Ser1637, and Ser1796 each carry the phosphoserine modification.

Phosphorylated in response to insulin.

The protein localises to the cytoplasmic vesicle membrane. The protein resides in the cell membrane. It is found in the cytoplasm. Its subcellular location is the cytosol. Its function is as follows. Guanine nucleotide exchange factor (GEF) activating RAB10. Promotes the exchange of GDP to GTP, converting inactive GDP-bound RAB10 into its active GTP-bound form. Thereby, stimulates SLC2A4/GLUT4 glucose transporter-enriched vesicles delivery to the plasma membrane in response to insulin. This is DENN domain-containing protein 4C (Dennd4c) from Mus musculus (Mouse).